The following is a 152-amino-acid chain: Lipoprotein signal peptidase (152 aa).

2 helical membrane passes run 55-75 (NKMW…VFYM) and 85-105 (LGIS…DRVF). Active-site residues include D111 and D129. A helical transmembrane segment spans residues 124 to 144 (VFNIADSALCIGVVLIIIQTL).

Belongs to the peptidase A8 family.

It localises to the cell membrane. The enzyme catalyses Release of signal peptides from bacterial membrane prolipoproteins. Hydrolyzes -Xaa-Yaa-Zaa-|-(S,diacylglyceryl)Cys-, in which Xaa is hydrophobic (preferably Leu), and Yaa (Ala or Ser) and Zaa (Gly or Ala) have small, neutral side chains.. Its pathway is protein modification; lipoprotein biosynthesis (signal peptide cleavage). Its function is as follows. This protein specifically catalyzes the removal of signal peptides from prolipoproteins. This chain is Lipoprotein signal peptidase, found in Bacillus cereus (strain B4264).